The following is a 541-amino-acid chain: Chaperonin GroEL 2 (541 aa).

Residues 29–32 (TLGP), 86–90 (DGTTT), Gly-413, 478–480 (NAA), and Asp-494 each bind ATP.

The protein belongs to the chaperonin (HSP60) family. In terms of assembly, forms a cylinder of 14 subunits composed of two heptameric rings stacked back-to-back. Interacts with the co-chaperonin GroES.

It localises to the cytoplasm. It catalyses the reaction ATP + H2O + a folded polypeptide = ADP + phosphate + an unfolded polypeptide.. Its function is as follows. Together with its co-chaperonin GroES, plays an essential role in assisting protein folding. The GroEL-GroES system forms a nano-cage that allows encapsulation of the non-native substrate proteins and provides a physical environment optimized to promote and accelerate protein folding. The protein is Chaperonin GroEL 2 of Corynebacterium jeikeium (strain K411).